The sequence spans 361 residues: Phospho-N-acetylmuramoyl-pentapeptide-transferase (361 aa).

10 helical membrane-spanning segments follow: residues Tyr21–Gly41, Val69–Ile89, Trp93–Phe113, Ser131–Ile151, Ile168–Ser188, Gly200–Ser220, Leu240–Tyr260, Ile264–Leu284, Ile289–Val309, and Lys338–Ile358.

It belongs to the glycosyltransferase 4 family. MraY subfamily. Requires Mg(2+) as cofactor.

It is found in the cell inner membrane. It carries out the reaction UDP-N-acetyl-alpha-D-muramoyl-L-alanyl-gamma-D-glutamyl-meso-2,6-diaminopimeloyl-D-alanyl-D-alanine + di-trans,octa-cis-undecaprenyl phosphate = di-trans,octa-cis-undecaprenyl diphospho-N-acetyl-alpha-D-muramoyl-L-alanyl-D-glutamyl-meso-2,6-diaminopimeloyl-D-alanyl-D-alanine + UMP. It functions in the pathway cell wall biogenesis; peptidoglycan biosynthesis. Its function is as follows. Catalyzes the initial step of the lipid cycle reactions in the biosynthesis of the cell wall peptidoglycan: transfers peptidoglycan precursor phospho-MurNAc-pentapeptide from UDP-MurNAc-pentapeptide onto the lipid carrier undecaprenyl phosphate, yielding undecaprenyl-pyrophosphoryl-MurNAc-pentapeptide, known as lipid I. The chain is Phospho-N-acetylmuramoyl-pentapeptide-transferase from Vesicomyosocius okutanii subsp. Calyptogena okutanii (strain HA).